Here is a 236-residue protein sequence, read N- to C-terminus: Peptidase E (236 aa).

Residues Ser-122, Asp-137, and His-159 each act as charge relay system in the active site.

It belongs to the peptidase S51 family.

The protein resides in the cytoplasm. It carries out the reaction Dipeptidase E catalyzes the hydrolysis of dipeptides Asp-|-Xaa. It does not act on peptides with N-terminal Glu, Asn or Gln, nor does it cleave isoaspartyl peptides.. Functionally, hydrolyzes dipeptides containing N-terminal aspartate residues. May play a role in allowing the cell to use peptide aspartate to spare carbon otherwise required for the synthesis of the aspartate family of amino acids. This is Peptidase E from Shewanella putrefaciens (strain CN-32 / ATCC BAA-453).